Reading from the N-terminus, the 390-residue chain is Protein phosphatase 1B (390 aa).

Positions 1–14 (MGAFLDKPKTEKHN) are enriched in basic and acidic residues. Positions 1–20 (MGAFLDKPKTEKHNAHGAGN) are disordered. Glycine 2 is lipidated: N-myristoyl glycine. A Glycyl lysine isopeptide (Lys-Gly) (interchain with G-Cter in ISG15) cross-link involves residue lysine 12. The region spanning 23–295 (RYGLSSMQGW…DNMSVVLVCF (273 aa)) is the PPM-type phosphatase domain. The Mn(2+) site is built by aspartate 60, glycine 61, aspartate 243, and aspartate 286. The disordered stretch occupies residues 371 to 390 (NPHKDNDGGAGDLEDSLVAL). Serine 386 carries the post-translational modification Phosphoserine.

This sequence belongs to the PP2C family. In terms of assembly, monomer. Interacts with PAK6. Interacts with the phosphorylated form of IKBKB/IKKB. Mg(2+) is required as a cofactor. It depends on Mn(2+) as a cofactor. Post-translationally, isgylation negatively regulates its activity. In terms of processing, N-myristoylation is essential for the recognition of its substrates for dephosphorylation. Isoform 1: Expressed ubiquitously. Isoform 2: Expressed exclusively in testis and intestine. Isoform 3: Expressed exclusively in brain and intestine. Isoform 4: Expressed exclusively in testis and intestine.

The protein resides in the cytoplasm. It localises to the cytosol. It is found in the membrane. It catalyses the reaction O-phospho-L-seryl-[protein] + H2O = L-seryl-[protein] + phosphate. The enzyme catalyses O-phospho-L-threonyl-[protein] + H2O = L-threonyl-[protein] + phosphate. In terms of biological role, enzyme with a broad specificity. Dephosphorylates PRKAA1 and PRKAA2. Inhibits TBK1-mediated antiviral signaling by dephosphorylating it at 'Ser-172'. Plays an important role in the termination of TNF-alpha-mediated NF-kappa-B activation through dephosphorylating and inactivating IKBKB/IKKB. In Mus musculus (Mouse), this protein is Protein phosphatase 1B (Ppm1b).